Here is a 281-residue protein sequence, read N- to C-terminus: Phosphatidylglycerol--prolipoprotein diacylglyceryl transferase (281 aa).

3 consecutive transmembrane segments (helical) span residues 11–31 (IIFT…VISF), 57–77 (LLYS…IIFY), and 89–109 (VFYI…AIIV). Residue Arg140 coordinates a 1,2-diacyl-sn-glycero-3-phospho-(1'-sn-glycerol). Helical transmembrane passes span 194-214 (PTQL…IYFF), 222-242 (GSIS…IEFF), and 255-275 (IITM…IIMY).

This sequence belongs to the Lgt family.

Its subcellular location is the cell inner membrane. It carries out the reaction L-cysteinyl-[prolipoprotein] + a 1,2-diacyl-sn-glycero-3-phospho-(1'-sn-glycerol) = an S-1,2-diacyl-sn-glyceryl-L-cysteinyl-[prolipoprotein] + sn-glycerol 1-phosphate + H(+). It participates in protein modification; lipoprotein biosynthesis (diacylglyceryl transfer). Catalyzes the transfer of the diacylglyceryl group from phosphatidylglycerol to the sulfhydryl group of the N-terminal cysteine of a prolipoprotein, the first step in the formation of mature lipoproteins. The polypeptide is Phosphatidylglycerol--prolipoprotein diacylglyceryl transferase (Buchnera aphidicola subsp. Acyrthosiphon pisum (strain APS) (Acyrthosiphon pisum symbiotic bacterium)).